Consider the following 613-residue polypeptide: DNA mismatch repair protein MutL (613 aa).

Residues 364-393 (EPAVARQPEAPRYSSGASAPRPTGANYPHA) form a disordered region.

It belongs to the DNA mismatch repair MutL/HexB family.

In terms of biological role, this protein is involved in the repair of mismatches in DNA. It is required for dam-dependent methyl-directed DNA mismatch repair. May act as a 'molecular matchmaker', a protein that promotes the formation of a stable complex between two or more DNA-binding proteins in an ATP-dependent manner without itself being part of a final effector complex. In Enterobacter sp. (strain 638), this protein is DNA mismatch repair protein MutL.